Consider the following 438-residue polypeptide: Coiled-coil domain-containing protein 78 (438 aa).

Coiled-coil stretches lie at residues 74-105 (HLHEQHEAEIFQLKSEILRLESRVLELELRGD) and 217-246 (SCQGQLRQAEAENARLQLQLKKLKDEYVLR). The segment at 345–381 (FSHREDQHGGPGALLSSPKKRPGGASQGGTSEPQGLD) is disordered.

The protein belongs to the CCDC78 family. Expressed primarily in skeletal muscle.

It localises to the cytoplasm. Its subcellular location is the cytoskeleton. The protein resides in the microtubule organizing center. The protein localises to the centrosome. It is found in the centriole. It localises to the perinuclear region. Its subcellular location is the cell membrane. The protein resides in the sarcolemma. The protein localises to the sarcoplasmic reticulum. In terms of biological role, component of the deuterosome, a structure that promotes de novo centriole amplification in multiciliated cells that can generate more than 100 centrioles. Deuterosome-mediated centriole amplification occurs in terminally differentiated multiciliated cells (G1/0) and not in S phase. Essential for centriole amplification and is required for CEP152 localization to the deuterosome. The protein is Coiled-coil domain-containing protein 78 (CCDC78) of Homo sapiens (Human).